A 177-amino-acid polypeptide reads, in one-letter code: Probable RNA 2'-phosphotransferase (177 aa).

The protein belongs to the KptA/TPT1 family.

Its function is as follows. Removes the 2'-phosphate from RNA via an intermediate in which the phosphate is ADP-ribosylated by NAD followed by a presumed transesterification to release the RNA and generate ADP-ribose 1''-2''-cyclic phosphate (APPR&gt;P). May function as an ADP-ribosylase. The protein is Probable RNA 2'-phosphotransferase (kptA) of Pyrococcus horikoshii (strain ATCC 700860 / DSM 12428 / JCM 9974 / NBRC 100139 / OT-3).